A 638-amino-acid polypeptide reads, in one-letter code: Threonine--tRNA ligase (638 aa).

Positions 1 to 61 (MPVITLPDGS…SVDGKLQIIT (61 aa)) constitute a TGS domain. A catalytic region spans residues 243–534 (DHRKIGKTQD…LTEEYAGFFP (292 aa)). Residues cysteine 334, histidine 385, and histidine 511 each coordinate Zn(2+).

Belongs to the class-II aminoacyl-tRNA synthetase family. As to quaternary structure, homodimer. The cofactor is Zn(2+).

The protein resides in the cytoplasm. The enzyme catalyses tRNA(Thr) + L-threonine + ATP = L-threonyl-tRNA(Thr) + AMP + diphosphate + H(+). Its function is as follows. Catalyzes the attachment of threonine to tRNA(Thr) in a two-step reaction: L-threonine is first activated by ATP to form Thr-AMP and then transferred to the acceptor end of tRNA(Thr). Also edits incorrectly charged L-seryl-tRNA(Thr). The polypeptide is Threonine--tRNA ligase (Hamiltonella defensa subsp. Acyrthosiphon pisum (strain 5AT)).